Here is a 174-residue protein sequence, read N- to C-terminus: Shikimate kinase 2 (174 aa).

Residue 12–17 (GAGKTT) participates in ATP binding. Residues T16 and D32 each coordinate Mg(2+). Substrate-binding residues include D34, R58, and G79. The segment at 112-126 (EEYPQDTQRPTLTGR) is LID domain. R120 provides a ligand contact to ATP. Residue R139 coordinates substrate.

Belongs to the shikimate kinase family. AroL subfamily. In terms of assembly, monomer. Mg(2+) serves as cofactor.

The protein localises to the cytoplasm. It carries out the reaction shikimate + ATP = 3-phosphoshikimate + ADP + H(+). It functions in the pathway metabolic intermediate biosynthesis; chorismate biosynthesis; chorismate from D-erythrose 4-phosphate and phosphoenolpyruvate: step 5/7. Functionally, catalyzes the specific phosphorylation of the 3-hydroxyl group of shikimic acid using ATP as a cosubstrate. The protein is Shikimate kinase 2 of Serratia proteamaculans (strain 568).